The sequence spans 589 residues: EZH inhibitory protein (589 aa).

3 disordered regions span residues 1–46, 61–548, and 561–589; these read MASS…LRLR, AGED…SGPN, and LDSS…KCRG. Gly residues-rich tracts occupy residues 29 to 38 and 105 to 114; these read GPRGRGGPSG and PKGGGKADQG. Residues 147-161 show a composition bias toward low complexity; it reads GAAGPPLPGARGSPA. Over residues 193–204 the composition is skewed to polar residues; it reads LRSSTSQGSGST. 4 stretches are compositionally biased toward low complexity: residues 299 to 308, 325 to 334, 351 to 360, and 374 to 390; these read RSSASAVSPE, RSSASVVSPE, and PRAT…TTRS. Serine 306 is subject to Phosphoserine. Positions 426–437 are enriched in basic and acidic residues; the sequence is MRLDLQVDREPE. Over residues 438-449 the composition is skewed to acidic residues; it reads SEAEQEEQELES. Residues 450–465 show a composition bias toward low complexity; it reads EPGPSSRPQASRSSSR. Residues 482–490 form a sufficient for interaction with EZH2 region; it reads RRPVRMRAS. Residues 484–503 form a necessary and sufficient for inhibition of PRC2/EED-EZH1 and PRC2/EED-EZH2 complex activity region; the sequence is PVRMRASSPSPPGRLYPLPK. A compositionally biased stretch (low complexity) spans 509–547; it reads VHSPSSSSSESSSVSSSHSPLNKAPDPGSSPPLSSLSGP. A compositionally biased stretch (basic and acidic residues) spans 575–589; it reads AAPHTREEEDKKCRG.

In terms of assembly, interacts with PRC2/EED-EZH1 complex member EZH1 and with PRC2/EED-EZH2 complex member EZH2; the interaction blocks EZH1/EZH2 methyltransferase activity. Interacts (via C-terminus) with SUZ12 which is a member of the PRC2/EED-EZH1 and PRC2/EED-EZH2 complexes. In terms of tissue distribution, highly expressed in ovary with lower expression in testis and very low levels in other tissues tested including prostate, brain, kidney, spleen and liver. During spermatogenesis, expressed mainly in spermatogonia with very low expression in spermatocytes I and II.

The protein resides in the nucleus. The protein localises to the cytoplasm. Functionally, inhibits PRC2/EED-EZH1 and PRC2/EED-EZH2 complex function by inhibiting EZH1/EZH2 methyltransferase activity, thereby causing down-regulation of histone H3 trimethylation at 'Lys-27' (H3K27me3). Probably inhibits methyltransferase activity by limiting the stimulatory effect of cofactors such as AEBP2 and JARID2. Inhibits H3K27me3 deposition during spermatogenesis and oogenesis. This Mus musculus (Mouse) protein is EZH inhibitory protein.